We begin with the raw amino-acid sequence, 429 residues long: 4-hydroxy-3-methylbut-2-en-1-yl diphosphate synthase (flavodoxin) (429 aa).

4 residues coordinate [4Fe-4S] cluster: cysteine 323, cysteine 326, cysteine 369, and glutamate 376.

The protein belongs to the IspG family. [4Fe-4S] cluster is required as a cofactor.

The catalysed reaction is (2E)-4-hydroxy-3-methylbut-2-enyl diphosphate + oxidized [flavodoxin] + H2O + 2 H(+) = 2-C-methyl-D-erythritol 2,4-cyclic diphosphate + reduced [flavodoxin]. It participates in isoprenoid biosynthesis; isopentenyl diphosphate biosynthesis via DXP pathway; isopentenyl diphosphate from 1-deoxy-D-xylulose 5-phosphate: step 5/6. In terms of biological role, converts 2C-methyl-D-erythritol 2,4-cyclodiphosphate (ME-2,4cPP) into 1-hydroxy-2-methyl-2-(E)-butenyl 4-diphosphate. The protein is 4-hydroxy-3-methylbut-2-en-1-yl diphosphate synthase (flavodoxin) of Wolbachia sp. subsp. Brugia malayi (strain TRS).